Here is a 580-residue protein sequence, read N- to C-terminus: Eukaryotic translation initiation factor 2A (580 aa).

WD repeat units lie at residues 21–62 (GPPN…TVLK), 72–121 (FDLP…CMKA), 270–311 (PKNG…VFDF), and 355–399 (QAED…LYKH). The disordered stretch occupies residues 435–530 (GSTEAKPAQA…SSCGDPETDK (96 aa)). A coiled-coil region spans residues 481–578 (SKAALKNQKR…LLKELEDLEL (98 aa)). Positions 494–505 (KKAAKQENKPDE) are enriched in basic and acidic residues.

The protein belongs to the WD repeat EIF2A family.

Functions in the early steps of protein synthesis of a small number of specific mRNAs. Acts by directing the binding of methionyl-tRNAi to 40S ribosomal subunits. In contrast to the eIF-2 complex, it binds methionyl-tRNAi to 40S subunits in a codon-dependent manner, whereas the eIF-2 complex binds methionyl-tRNAi to 40S subunits in a GTP-dependent manner. This Danio rerio (Zebrafish) protein is Eukaryotic translation initiation factor 2A (eif2a).